The chain runs to 210 residues: Na(+)-translocating NADH-quinone reductase subunit D (210 aa).

6 helical membrane passes run 14-34 (PIVN…ALAV), 42-62 (LVMA…ISMI), 72-92 (IIVQ…LLQA), 103-123 (VFVG…AYAM), 131-151 (FMDG…VGFV), and 178-198 (NGLL…IWII).

Belongs to the NqrDE/RnfAE family. As to quaternary structure, composed of six subunits; NqrA, NqrB, NqrC, NqrD, NqrE and NqrF.

It localises to the cell inner membrane. It carries out the reaction a ubiquinone + n Na(+)(in) + NADH + H(+) = a ubiquinol + n Na(+)(out) + NAD(+). Functionally, NQR complex catalyzes the reduction of ubiquinone-1 to ubiquinol by two successive reactions, coupled with the transport of Na(+) ions from the cytoplasm to the periplasm. NqrA to NqrE are probably involved in the second step, the conversion of ubisemiquinone to ubiquinol. This chain is Na(+)-translocating NADH-quinone reductase subunit D, found in Shewanella baltica (strain OS223).